We begin with the raw amino-acid sequence, 2151 residues long: Protein PRR14L (2151 aa).

Composition is skewed to basic and acidic residues over residues 112 to 123 (KRSESMEPKVFR) and 134 to 154 (EPSEGAKEDPHQHSTAAEEKT). Disordered regions lie at residues 112–160 (KRSE…SQED), 206–225 (GTKTDNNEGHKNGNVSKDLS), and 314–350 (QLHGHHNEQPSSTHDSPTATSPLKENSEVSCFTSDLS). S157 carries the phosphoserine modification. Residues 322–350 (QPSSTHDSPTATSPLKENSEVSCFTSDLS) show a composition bias toward polar residues. A phosphoserine mark is found at S582 and S945. A disordered region spans residues 974-1017 (SNQNRPDECKSEGQSAKEMLSSDQRETVTEPHGEVNHNQKDLLV). Over residues 996 to 1013 (DQRETVTEPHGEVNHNQK) the composition is skewed to basic and acidic residues. Residue S1029 is modified to Phosphoserine. A compositionally biased stretch (basic and acidic residues) spans 1091-1103 (DSRSTLSRRELDA). Disordered stretches follow at residues 1091-1115 (DSRSTLSRRELDAAHTGTTGQDSDF), 1178-1226 (DSHY…SCHD), 1782-1802 (TGVHSQTHTQAPPQPPAPLQD), and 1986-2012 (AACPCPQSSPPEQKEAEPEKRPKKVSQ). The segment covering 1178-1187 (DSHYGQQDKG) has biased composition (polar residues). Positions 1188 to 1201 (TSLRETQEMTEGSR) are enriched in basic and acidic residues.

The polypeptide is Protein PRR14L (PRR14L) (Homo sapiens (Human)).